We begin with the raw amino-acid sequence, 478 residues long: tRNA(Ile)-lysidine synthase (478 aa).

An ATP-binding site is contributed by 27–32; the sequence is SGGSDS.

Belongs to the tRNA(Ile)-lysidine synthase family.

The protein localises to the cytoplasm. The enzyme catalyses cytidine(34) in tRNA(Ile2) + L-lysine + ATP = lysidine(34) in tRNA(Ile2) + AMP + diphosphate + H(+). Its function is as follows. Ligates lysine onto the cytidine present at position 34 of the AUA codon-specific tRNA(Ile) that contains the anticodon CAU, in an ATP-dependent manner. Cytidine is converted to lysidine, thus changing the amino acid specificity of the tRNA from methionine to isoleucine. The polypeptide is tRNA(Ile)-lysidine synthase (Rickettsia rickettsii (strain Iowa)).